The following is a 1581-amino-acid chain: MPEPTKISILGKESIVADFGLWRNYVAKDLISGCPSTTYVLITDTNIGSIYTPSFQKTFEEAAAAISPSPRLLVYHAPPGEVSKSRQTKADIEDWMLSQSPPCGRDTVVIALGGGVIGDLTGFIAATYMRGVRYVQVPTTLLAMVDSSIGGKTAIDTPLGKNLIGAIWQPTRIYIDLEFLETLPVREFINGMAEVIKTAAISSEEEFTALEENAETILSAVRREVKPGQHRFAGLEDILKARILASARHKAYVVSEDEREGGLRNLLNWGHSIGHAIEAILTPQILHGECVAIGMVKEAELARHLGILKNVAVARIVKCIAAYGLPTSLKDSRIRKLTAGKHCSVDQLLFNMALDKKNDGPKKKIVLLSAIGQPYEPKASVVPNEDISVVLAPSVEVHPGVPKESNVVCAPPGSKSISNRALVLAALGSGTCRIKNLLYSDDTEVMMNALERIGAATFSWEEEGEVLVVNGKGGDIKASPTPLYLGNAGTASRFLTTVVTLATASTVDHSVLTGNNRMKQRPIGDLVDALTANGASVEYLEKKGSLPLKIGAGGGFAGGRINLAAKVSSQFVSSLLMCAPYAKEPVTLKLVGGKPISEPYIEMTTAMMRSFGIEVQKSTTEEFTYHIPQGRYVNPAEYVVESDASSATYPLAIAAVSGTTCTIPNIGSKSLQGDARFAVDVLRPMGCTVTQTETSTTVTGPADGILRPLPNVDMEPMTDAFLGASVLAAIARGEGSNHTTRIYGIANQRVKECNRIKAMKDELAKFGVVCREHDDGLEIDGIDRSTLRQPAGGVFCYDDHRVAFSFSVLSLVTPQPTLILEKECVGKTWPGWWDTLRQLFSVKLEGRELKEEETPVLTGAEKASASVFIIGMRGAGKTTSGKWVAKALNRPFVDLDTELETNEGMAIPEIIKQRGWQGFRDAELSLLQRTLKERATGYVFACGGGIVEIPEARKLLIDYHKNKGNVLLIMRDIKQVMDFLSIDQTRPAYVEDMMGVWLRRKPWFNECSNIQYYSQHASSSGLTRASEDFERFLKVVTGQVDNLSLIKQKKHSFFVSLTLPDLRSASDILDEVCVGSDAVELRVDLLKDPASDSDIPSVDYVAEQMSFLRSRTALPLIFTIRTKSQGGRFPDDAHDAAMDLYRLAMRSGSEFVDLEIAFPDEMLRAVTEMKGYSKIIASHHDPKGELSWSNMSWIKYYNRALEYGDVIKLVGVAKNLDDNTALRKFKTWAEEAHDVPMIAINMGDNGQLSRILNGFMTPVSHPSLPFKAAPGQLSATEIRRGLSLMGEIKKKRFAIFGNPVSVSRSPALHNTLFQQSGLPHEYTRLETSNAEDVKDFIRSPDFGGASVTIPLKLDIMPLLDEIAREAEIIGAVNTIVPVNNGSDKTRLVGYNTDWQGMILSLRNAGVYGANKDASAVVVGGGGTARAAIFALHNMGYSPIYVIGRSASKLQSMVETFPTGYNIRVVDSSEQIDTVPQVAIGTIPADRPIDPGMRETLCHMFERAQELDADIVKTGEKAPRVLLEMAYKPAVTALMQLASDAGWLTIPGLEVLVGQGWYQFKHWTGISPLYKDARTAVLGDSA.

The segment at 1–384 (MPEPTKISIL…YEPKASVVPN (384 aa)) is 3-dehydroquinate synthase. NAD(+)-binding positions include 44-46 (DTN), 81-84 (EVSK), 114-116 (GGV), and D119. R130 is a 7-phospho-2-dehydro-3-deoxy-D-arabino-heptonate binding site. Residue 139–140 (TT) participates in NAD(+) binding. The 7-phospho-2-dehydro-3-deoxy-D-arabino-heptonate site is built by D146 and K152. An NAD(+)-binding site is contributed by K161. N162 is a binding site for 7-phospho-2-dehydro-3-deoxy-D-arabino-heptonate. NAD(+) contacts are provided by residues 179 to 182 (FLET) and N190. Residue E194 coordinates Zn(2+). 7-phospho-2-dehydro-3-deoxy-D-arabino-heptonate is bound by residues 194 to 197 (EVIK) and K250. E260 serves as the catalytic Proton acceptor; for 3-dehydroquinate synthase activity. 7-phospho-2-dehydro-3-deoxy-D-arabino-heptonate is bound by residues 264–268 (RNLLN) and H271. Position 271 (H271) interacts with Zn(2+). The active-site Proton acceptor; for 3-dehydroquinate synthase activity is H275. 7-phospho-2-dehydro-3-deoxy-D-arabino-heptonate-binding residues include H287 and K356. H287 is a Zn(2+) binding site. An EPSP synthase region spans residues 397 to 842 (VHPGVPKESN…WDTLRQLFSV (446 aa)). C824 serves as the catalytic For EPSP synthase activity. The segment at 864–1056 (SASVFIIGMR…KQKKHSFFVS (193 aa)) is shikimate kinase. ATP is bound at residue 871 to 878 (GMRGAGKT). Residues 1057–1277 (LTLPDLRSAS…AAPGQLSATE (221 aa)) are 3-dehydroquinase. Residue H1180 is the Proton acceptor; for 3-dehydroquinate dehydratase activity of the active site. The Schiff-base intermediate with substrate; for 3-dehydroquinate dehydratase activity role is filled by K1208. The tract at residues 1290-1581 (KKRFAIFGNP…ARTAVLGDSA (292 aa)) is shikimate dehydrogenase.

It in the N-terminal section; belongs to the sugar phosphate cyclases superfamily. Dehydroquinate synthase family. This sequence in the 2nd section; belongs to the EPSP synthase family. In the 3rd section; belongs to the shikimate kinase family. The protein in the 4th section; belongs to the type-I 3-dehydroquinase family. It in the C-terminal section; belongs to the shikimate dehydrogenase family. Homodimer. It depends on Zn(2+) as a cofactor.

The protein localises to the cytoplasm. It carries out the reaction 7-phospho-2-dehydro-3-deoxy-D-arabino-heptonate = 3-dehydroquinate + phosphate. The enzyme catalyses 3-dehydroquinate = 3-dehydroshikimate + H2O. It catalyses the reaction shikimate + NADP(+) = 3-dehydroshikimate + NADPH + H(+). The catalysed reaction is shikimate + ATP = 3-phosphoshikimate + ADP + H(+). It carries out the reaction 3-phosphoshikimate + phosphoenolpyruvate = 5-O-(1-carboxyvinyl)-3-phosphoshikimate + phosphate. The protein operates within metabolic intermediate biosynthesis; chorismate biosynthesis; chorismate from D-erythrose 4-phosphate and phosphoenolpyruvate: step 2/7. It functions in the pathway metabolic intermediate biosynthesis; chorismate biosynthesis; chorismate from D-erythrose 4-phosphate and phosphoenolpyruvate: step 3/7. Its pathway is metabolic intermediate biosynthesis; chorismate biosynthesis; chorismate from D-erythrose 4-phosphate and phosphoenolpyruvate: step 4/7. It participates in metabolic intermediate biosynthesis; chorismate biosynthesis; chorismate from D-erythrose 4-phosphate and phosphoenolpyruvate: step 5/7. The protein operates within metabolic intermediate biosynthesis; chorismate biosynthesis; chorismate from D-erythrose 4-phosphate and phosphoenolpyruvate: step 6/7. The AROM polypeptide catalyzes 5 consecutive enzymatic reactions in prechorismate polyaromatic amino acid biosynthesis. The sequence is that of Pentafunctional AROM polypeptide from Aspergillus terreus (strain NIH 2624 / FGSC A1156).